Consider the following 305-residue polypeptide: tRNA pseudouridine synthase B (305 aa).

Residue Asp39 is the Nucleophile of the active site.

It belongs to the pseudouridine synthase TruB family. Type 1 subfamily.

The catalysed reaction is uridine(55) in tRNA = pseudouridine(55) in tRNA. Responsible for synthesis of pseudouridine from uracil-55 in the psi GC loop of transfer RNAs. The sequence is that of tRNA pseudouridine synthase B from Staphylococcus saprophyticus subsp. saprophyticus (strain ATCC 15305 / DSM 20229 / NCIMB 8711 / NCTC 7292 / S-41).